Reading from the N-terminus, the 197-residue chain is Phosphoheptose isomerase (197 aa).

Residues 34–196 enclose the SIS domain; that stretch reads MVHCLLGGNK…DRTLFPQDEQ (163 aa). 49 to 51 lines the substrate pocket; the sequence is NGG. Zn(2+)-binding residues include His-58 and Glu-62. Substrate-binding positions include Glu-62, 91 to 92, 117 to 119, Ser-122, and Gln-172; these read ND and STS. Residues Gln-172 and His-180 each contribute to the Zn(2+) site.

Belongs to the SIS family. GmhA subfamily. Homotetramer. The cofactor is Zn(2+).

Its subcellular location is the cytoplasm. The enzyme catalyses 2 D-sedoheptulose 7-phosphate = D-glycero-alpha-D-manno-heptose 7-phosphate + D-glycero-beta-D-manno-heptose 7-phosphate. Its pathway is carbohydrate biosynthesis; D-glycero-D-manno-heptose 7-phosphate biosynthesis; D-glycero-alpha-D-manno-heptose 7-phosphate and D-glycero-beta-D-manno-heptose 7-phosphate from sedoheptulose 7-phosphate: step 1/1. In terms of biological role, catalyzes the isomerization of sedoheptulose 7-phosphate in D-glycero-D-manno-heptose 7-phosphate. This is Phosphoheptose isomerase from Shewanella sp. (strain W3-18-1).